Reading from the N-terminus, the 468-residue chain is 6-phospho-beta-galactosidase (468 aa).

D-galactose 6-phosphate contacts are provided by Gln19, His116, Asn159, Glu160, and Asn297. Catalysis depends on Glu160, which acts as the Proton donor. Glu375 functions as the Nucleophile in the catalytic mechanism. Residues Ser428, Trp429, Lys435, and Tyr437 each contribute to the D-galactose 6-phosphate site.

The protein belongs to the glycosyl hydrolase 1 family.

It carries out the reaction a 6-phospho-beta-D-galactoside + H2O = D-galactose 6-phosphate + an alcohol. It functions in the pathway carbohydrate metabolism; lactose degradation; D-galactose 6-phosphate and beta-D-glucose from lactose 6-phosphate: step 1/1. The sequence is that of 6-phospho-beta-galactosidase from Streptococcus pyogenes serotype M5 (strain Manfredo).